A 462-amino-acid polypeptide reads, in one-letter code: Glutamate-1-semialdehyde 2,1-aminomutase (462 aa).

The tract at residues 178-200 (DDPQRPASPRSQSSRGLPSSPGV) is disordered. Residues 182 to 192 (RPASPRSQSSR) show a composition bias toward low complexity. Position 297 is an N6-(pyridoxal phosphate)lysine (K297).

It belongs to the class-III pyridoxal-phosphate-dependent aminotransferase family. HemL subfamily. In terms of assembly, homodimer. Pyridoxal 5'-phosphate is required as a cofactor.

It is found in the cytoplasm. The enzyme catalyses (S)-4-amino-5-oxopentanoate = 5-aminolevulinate. The protein operates within porphyrin-containing compound metabolism; protoporphyrin-IX biosynthesis; 5-aminolevulinate from L-glutamyl-tRNA(Glu): step 2/2. The sequence is that of Glutamate-1-semialdehyde 2,1-aminomutase (hemL) from Mycobacterium bovis (strain ATCC BAA-935 / AF2122/97).